Consider the following 1204-residue polypeptide: Bromodomain and PHD finger-containing protein 3 (1204 aa).

Disordered stretches follow at residues 1-27 (MRKP…KCSP) and 76-127 (SNKE…TGSQ). Residues 89–99 (KSKKPSSKGKR) show a composition bias toward basic residues. The PHD-type 1 zinc-finger motif lies at 212 to 262 (DAFCCVCLDDECHNSNVILFCDICNLAVHQECYGVPYIPEGQWLCRCCLQS). The C2HC pre-PHD-type zinc-finger motif lies at 266–299 (PVDCVLCPNKGGAFKQTSDGHWAHVVCAIWIPEV). The PHD-type 2 zinc finger occupies 323–387 (LTCYICKQKG…RKTAYCEAHS (65 aa)). Positions 393-464 (ARRKGDSPRS…KKEPEEAGRE (72 aa)) are disordered. Ser399 and Ser402 each carry phosphoserine. The segment covering 417–429 (GEEEQEEAEEEGQ) has biased composition (acidic residues). Residues 442-454 (VSKKGKMSLKQKI) are compositionally biased toward basic residues. N6-acetyllysine is present on residues Lys445, Lys447, and Lys670. Positions 588-692 (LELMPFTVLL…DLGGAILRHA (105 aa)) constitute a Bromo domain. 2 positions are modified to phosphoserine: Ser712 and Ser739. Residues 778-879 (RQKLAQPPPP…FLKSRKVEDE (102 aa)) form a disordered region. Residues 816–826 (QQEEPEEEGDR) show a composition bias toward acidic residues. Phosphoserine is present on residues Ser899, Ser961, and Ser964. Residues 903–1015 (IDRLSLTNPD…ESGSDSECSL (113 aa)) are disordered. Over residues 979 to 990 (SCSDSEGERSPQ) the composition is skewed to basic and acidic residues. The PWWP domain maps to 1075–1158 (PLELVWAKCR…RDKVLPLGVE (84 aa)).

In terms of assembly, component of some HBO1 complexes composed of KAT7/HBO1, MEAF6, ING4 or ING5, and BRPF3. Component of the MOZ/MORF complex composed at least of ING5, KAT6A, KAT6B, MEAF6 and one of BRPF1, BRD1/BRPF2 and BRPF3. Interacts with KAT7/HBO1; the interaction is direct. In terms of tissue distribution, highly expressed in the adult testis and brain.

The protein localises to the nucleus. Scaffold subunit of various histone acetyltransferase (HAT) complexes, such as the MOZ/MORF and HBO1 complexes, which have a histone H3 acetyltransferase activity. Plays a role in DNA replication initiation by directing KAT7/HBO1 specificity towards histone H3 'Lys-14' acetylation (H3K14ac), thereby facilitating the activation of replication origins. Component of the MOZ/MORF complex which has a histone H3 acetyltransferase activity. In Mus musculus (Mouse), this protein is Bromodomain and PHD finger-containing protein 3.